Reading from the N-terminus, the 243-residue chain is MKDTLFNKSLNKRFCFDEKVAHVFDDMLERSIPYYHEMLNLGAYFIAQNLKENIHPKPLPKPLIYDLGCSTGNFFIALNQQIQQDIELVGIDNSMPMLKKAQEKLKDFNNVRFECMDFLEVEFKEASAFSLLFVLQFVRPMQREVLLKKIYNSLALNGVLLVGEKIMSEDRILDKQMIELYYLYKQNQGYSHNEIAFKREALENVLVPYSLKENVALLESVGFKHVEAVFKWVNFTLLVARKT.

Residues Y35, 68–70 (GCS), 92–93 (DN), and R199 each bind S-adenosyl-L-methionine.

Belongs to the class I-like SAM-binding methyltransferase superfamily. Cx-SAM synthase family. Homodimer.

It carries out the reaction prephenate + S-adenosyl-L-methionine = carboxy-S-adenosyl-L-methionine + 3-phenylpyruvate + H2O. In terms of biological role, catalyzes the conversion of S-adenosyl-L-methionine (SAM) to carboxy-S-adenosyl-L-methionine (Cx-SAM). The chain is Carboxy-S-adenosyl-L-methionine synthase from Helicobacter pylori (strain P12).